We begin with the raw amino-acid sequence, 207 residues long: Ion-translocating oxidoreductase complex subunit G (207 aa).

The helical transmembrane segment at 11–31 (GILLGFIALLCTIISAGIYFL) threads the bilayer. Residue T175 is modified to FMN phosphoryl threonine.

This sequence belongs to the RnfG family. As to quaternary structure, the complex is composed of six subunits: RnfA, RnfB, RnfC, RnfD, RnfE and RnfG. FMN is required as a cofactor.

It is found in the cell inner membrane. In terms of biological role, part of a membrane-bound complex that couples electron transfer with translocation of ions across the membrane. This Haemophilus influenzae (strain PittEE) protein is Ion-translocating oxidoreductase complex subunit G.